Here is a 128-residue protein sequence, read N- to C-terminus: MARIAGVDLPRDKRIEYALTLIYGIGWTTARKILERTGIDPWTKVRDLTDDEVQRLRDIIEKEMVVEGDLRRQVAMNIKRLIDIGCYRGLRHRMGLPVRGQRTRTNARTRKGPRPRIGVKKKGKQAGS.

Residues 98-128 (VRGQRTRTNARTRKGPRPRIGVKKKGKQAGS) form a disordered region. Over residues 101-128 (QRTRTNARTRKGPRPRIGVKKKGKQAGS) the composition is skewed to basic residues.

It belongs to the universal ribosomal protein uS13 family. As to quaternary structure, part of the 30S ribosomal subunit. Forms a loose heterodimer with protein S19. Forms two bridges to the 50S subunit in the 70S ribosome.

Functionally, located at the top of the head of the 30S subunit, it contacts several helices of the 16S rRNA. In the 70S ribosome it contacts the 23S rRNA (bridge B1a) and protein L5 of the 50S subunit (bridge B1b), connecting the 2 subunits; these bridges are implicated in subunit movement. Contacts the tRNAs in the A and P-sites. The protein is Small ribosomal subunit protein uS13 of Thermomicrobium roseum (strain ATCC 27502 / DSM 5159 / P-2).